A 293-amino-acid polypeptide reads, in one-letter code: Energy-coupling factor transporter ATP-binding protein EcfA2 (293 aa).

In terms of domain architecture, ABC transporter spans I3 to D246. G40–S47 contacts ATP.

The protein belongs to the ABC transporter superfamily. Energy-coupling factor EcfA family. In terms of assembly, forms a stable energy-coupling factor (ECF) transporter complex composed of 2 membrane-embedded substrate-binding proteins (S component), 2 ATP-binding proteins (A component) and 2 transmembrane proteins (T component).

It localises to the cell membrane. Functionally, ATP-binding (A) component of a common energy-coupling factor (ECF) ABC-transporter complex. Unlike classic ABC transporters this ECF transporter provides the energy necessary to transport a number of different substrates. The protein is Energy-coupling factor transporter ATP-binding protein EcfA2 of Bacillus cereus (strain ATCC 14579 / DSM 31 / CCUG 7414 / JCM 2152 / NBRC 15305 / NCIMB 9373 / NCTC 2599 / NRRL B-3711).